The chain runs to 462 residues: uncharacterized protein (462 aa).

The segment at 1–108 (MEDSNTNKDI…NGQDDQDEMD (108 aa)) is disordered. Positions 36–51 (TVERILERKQKERESK) are enriched in basic and acidic residues. Low complexity predominate over residues 64 to 95 (SSPSSLLSSPISSNDNNNNNNNNNNESFDINN). The stretch at 119 to 150 (LLKRKAALAAKKKESLAEQMKKYNQQYDSIIS) forms a coiled coil. Residues 188 to 208 (SKLQSLNNNTSPSTSSSNLID) are disordered. Residues 190–208 (LQSLNNNTSPSTSSSNLID) are compositionally biased toward low complexity.

This is an uncharacterized protein from Dictyostelium discoideum (Social amoeba).